A 106-amino-acid polypeptide reads, in one-letter code: Large ribosomal subunit protein bL21 (106 aa).

Belongs to the bacterial ribosomal protein bL21 family. In terms of assembly, part of the 50S ribosomal subunit. Contacts protein L20.

This protein binds to 23S rRNA in the presence of protein L20. The polypeptide is Large ribosomal subunit protein bL21 (Xylella fastidiosa (strain 9a5c)).